The following is a 154-amino-acid chain: Low molecular weight protein-tyrosine-phosphatase PtpA (154 aa).

Catalysis depends on Cys-8, which acts as the Nucleophile. Arg-14 is a catalytic residue. The active-site Proton donor is the Asp-120.

The protein belongs to the low molecular weight phosphotyrosine protein phosphatase family. Interacts with host CORO1A. In terms of processing, phosphorylations at Tyr-122 and Tyr-123 are essential for phosphatase activity.

Its subcellular location is the secreted. The enzyme catalyses O-phospho-L-tyrosyl-[protein] + H2O = L-tyrosyl-[protein] + phosphate. Secreted tyrosine phosphatase that plays a critical role during infection as a bacterial effector protein that counteracts host defenses. Required for intramacrophage survival. The chain is Low molecular weight protein-tyrosine-phosphatase PtpA (ptpA) from Staphylococcus aureus (strain MRSA252).